A 64-amino-acid chain; its full sequence is Large ribosomal subunit protein bL35 (64 aa).

Positions 1-15 (MPKQKSHSGASKRFR) are enriched in basic residues. The tract at residues 1 to 22 (MPKQKSHSGASKRFRVTGSGKV) is disordered.

This sequence belongs to the bacterial ribosomal protein bL35 family.

The polypeptide is Large ribosomal subunit protein bL35 (Frankia casuarinae (strain DSM 45818 / CECT 9043 / HFP020203 / CcI3)).